Reading from the N-terminus, the 305-residue chain is Aurora/IPL1-related protein kinase 2 (305 aa).

The region spanning 30 to 280 (FEIGRPLGKG…LEQVKEHYWI (251 aa)) is the Protein kinase domain. Residues 36–44 (LGKGKFGSV) and lysine 59 each bind ATP. The active-site Proton acceptor is the aspartate 153.

This sequence belongs to the protein kinase superfamily. Ser/Thr protein kinase family. Aurora subfamily. Component of the CPC complex which consists of icp-1; csc-1; bir-1 and air-2. Within the complex, interacts with icp-1; csc-1 and bir-1. Interacts with zen-4. Interacts with tlk-1 and bmk-1. In terms of processing, phosphorylated. Increased phosphorylation upon chromatin obstructions at anaphase.

The protein localises to the cytoplasm. It localises to the cytoskeleton. It is found in the chromosome. Its subcellular location is the midbody. The protein resides in the spindle. The catalysed reaction is L-seryl-[protein] + ATP = O-phospho-L-seryl-[protein] + ADP + H(+). The enzyme catalyses L-threonyl-[protein] + ATP = O-phospho-L-threonyl-[protein] + ADP + H(+). Its function is as follows. Serine/threonine-protein kinase component of the chromosomal passenger complex (CPC), a complex that acts as a key regulator of chromosome segregation and cytokinesis. The CPC complex has essential functions at the centromere in ensuring correct chromosome alignment and segregation. Required for histone H3 phosphorylation during segregation of homologous chromosomes in meiosis and mitosis. Required for histone H3 'Ser-10' phosphorylation. Phosphorylates tlk-1 at 'Ser-634', which enhances its activity. Phosphorylates zen-4 at 'Ser-680'. Required for the recruitment of bub-1 to the ring-shaped domain between chromosomes during meiotic anaphase I. Also required for the localization of the condensin I complex subunit smc-4 to mitotic chromosomes. Acts at the spindle midzone and the midbody to prevent cleavage furrow regression upon chromatin obstructions during cytokinesis. The protein is Aurora/IPL1-related protein kinase 2 of Caenorhabditis elegans.